Here is a 1263-residue protein sequence, read N- to C-terminus: Topoisomerase 1-associated factor 1 (1263 aa).

2 disordered regions span residues 1042-1098 and 1178-1263; these read ERQL…DDSQ and VEES…DEEE. Basic residues predominate over residues 1060–1071; sequence TKGKARKKSKEK. The segment covering 1179-1189 has biased composition (acidic residues); that stretch reads EESDNDDEVEE. Residues 1211-1226 show a composition bias toward polar residues; that stretch reads VDTQQDLSDNTSNTSD.

Belongs to the timeless family. Component of the fork protection complex (FPC) consisting of TOF1 and CSM3.

It is found in the nucleus. Functionally, forms a fork protection complex (FPC) with CSM3 and which is required for chromosome segregation during meiosis and DNA damage repair. FPC coordinates leading and lagging strand synthesis and moves with the replication fork. FPC stabilizes replication forks in a configuration that is recognized by replication checkpoint sensors. The polypeptide is Topoisomerase 1-associated factor 1 (YBL053) (Candida albicans (strain SC5314 / ATCC MYA-2876) (Yeast)).